Consider the following 868-residue polypeptide: Muscle, skeletal receptor tyrosine protein kinase (868 aa).

A signal peptide spans 1–21 (MRELVNIPLLQMLTLVAFSGT). At 22-494 (EKLPKAPVIT…FAVSPAYSMT (473 aa)) the chain is on the extracellular side. 3 Ig-like domains span residues 28–116 (PVIT…GALQ), 121–205 (PKIT…KLVK), and 212–302 (ARIL…ATVS). Disulfide bonds link Cys49–Cys99, Cys98–Cys112, and Cys142–Cys190. Asn222 is a glycosylation site (N-linked (GlcNAc...) asparagine). Intrachain disulfides connect Cys233-Cys282, Cys317-Cys382, Cys325-Cys375, Cys366-Cys406, Cys394-Cys447, and Cys398-Cys434. The FZ domain occupies 312–450 (ESKGYCAQYR…HQDPTACTRL (139 aa)). The N-linked (GlcNAc...) asparagine glycan is linked to Asn338. Residue Asn459 is glycosylated (N-linked (GlcNAc...) asparagine). A helical transmembrane segment spans residues 495–515 (VIISIMSCFAVFALLTITTLY). The Cytoplasmic segment spans residues 516–868 (CCRRRREWKN…CERAEGTVGV (353 aa)). Tyr553 is modified (phosphotyrosine; by autocatalysis). Residues 574-855 (IEYVRDIGEG…PSFCSIHRIL (282 aa)) enclose the Protein kinase domain. Residues 580–588 (IGEGAFGRV) and Lys608 contribute to the ATP site. Residues Ser680 and Ser697 each carry the phosphoserine; by CK2 modification. Asp724 functions as the Proton acceptor in the catalytic mechanism. Tyr754 is subject to Phosphotyrosine; by autocatalysis.

The protein belongs to the protein kinase superfamily. Tyr protein kinase family. As to quaternary structure, monomer. Homodimer. Interacts with LRP4; the heterodimer forms an AGRIN receptor complex that binds AGRIN resulting in activation of MUSK. Forms a heterotetramer composed of 2 DOK7 and 2 MUSK molecules which facilitates MUSK trans-autophosphorylation on tyrosine residue and activation. Interacts (via cytoplasmic part) with DOK7 (via IRS-type PTB domain); requires MUSK phosphorylation. Interacts with DVL1 (via DEP domain); the interaction is direct and mediates the formation of a DVL1, MUSK and PAK1 ternary complex involved in AChR clustering. Interacts with PDZRN3; this interaction is enhanced by agrin. Interacts with FNTA; the interaction is direct and mediates AGRIN-induced phosphorylation and activation of FNTA. Interacts with CSNK2B; mediates regulation by CK2. Interacts (via the cytoplasmic domain) with DNAJA3. Interacts with NSF; may regulate MUSK endocytosis and activity. Interacts with CAV3; may regulate MUSK signaling. Interacts with RNF31. Interacts with DOK7. It depends on Mg(2+) as a cofactor. Post-translationally, ubiquitinated by PDZRN3. Ubiquitination promotes endocytosis and lysosomal degradation. In terms of processing, phosphorylated. Phosphorylation is induced by AGRIN in a LRP4-dependent manner. Autophosphorylated. Autophosphorylation at Tyr-553 is required for interaction with DOK7 which in turn stimulates the phosphorylation and the activation of MUSK. Neddylated. Muscle specific.

Its subcellular location is the postsynaptic cell membrane. The enzyme catalyses L-tyrosyl-[protein] + ATP = O-phospho-L-tyrosyl-[protein] + ADP + H(+). Positively regulated by CK2. Its function is as follows. Receptor tyrosine kinase which plays a central role in the formation and the maintenance of the neuromuscular junction (NMJ), the synapse between the motor neuron and the skeletal muscle. Recruitment of AGRIN by LRP4 to the MUSK signaling complex induces phosphorylation and activation of MUSK, the kinase of the complex. The activation of MUSK in myotubes regulates the formation of NMJs through the regulation of different processes including the specific expression of genes in subsynaptic nuclei, the reorganization of the actin cytoskeleton and the clustering of the acetylcholine receptors (AChR) in the postsynaptic membrane. May regulate AChR phosphorylation and clustering through activation of ABL1 and Src family kinases which in turn regulate MUSK. DVL1 and PAK1 that form a ternary complex with MUSK are also important for MUSK-dependent regulation of AChR clustering. May positively regulate Rho family GTPases through FNTA. Mediates the phosphorylation of FNTA which promotes prenylation, recruitment to membranes and activation of RAC1 a regulator of the actin cytoskeleton and of gene expression. Other effectors of the MUSK signaling include DNAJA3 which functions downstream of MUSK. May also play a role within the central nervous system by mediating cholinergic responses, synaptic plasticity and memory formation. The polypeptide is Muscle, skeletal receptor tyrosine protein kinase (Musk) (Rattus norvegicus (Rat)).